We begin with the raw amino-acid sequence, 236 residues long: MTRRYWNINLKEMIEAGVHFGHGIKKWNPKMAPYISAKRKGTHIINLARTARFLSEACDLVFDAASQGKSFLIVGTKKRATDLVASAAIRARCHYVNKKWFSGMLTNWSITKTRLSQFRDLRAEEKMGKFHHLPKRDVAILKRKLSTLQRYLGGIKYMTRLPDIVIVLDQQKEYIALRECAILGIPTISLVDTNCDPDLANISIPANDDTMTSIRLILNKLVFSICEGRSLYIRNR.

This sequence belongs to the universal ribosomal protein uS2 family.

It localises to the plastid. Its subcellular location is the chloroplast. The polypeptide is Small ribosomal subunit protein uS2c (rps2) (Triticum aestivum (Wheat)).